A 470-amino-acid chain; its full sequence is ATP synthase subunit beta (470 aa).

157–164 (GGAGVGKT) lines the ATP pocket.

This sequence belongs to the ATPase alpha/beta chains family. As to quaternary structure, F-type ATPases have 2 components, CF(1) - the catalytic core - and CF(0) - the membrane proton channel. CF(1) has five subunits: alpha(3), beta(3), gamma(1), delta(1), epsilon(1). CF(0) has three main subunits: a(1), b(2) and c(9-12). The alpha and beta chains form an alternating ring which encloses part of the gamma chain. CF(1) is attached to CF(0) by a central stalk formed by the gamma and epsilon chains, while a peripheral stalk is formed by the delta and b chains.

The protein localises to the cell inner membrane. It carries out the reaction ATP + H2O + 4 H(+)(in) = ADP + phosphate + 5 H(+)(out). Produces ATP from ADP in the presence of a proton gradient across the membrane. The catalytic sites are hosted primarily by the beta subunits. The sequence is that of ATP synthase subunit beta from Geobacter sp. (strain M21).